A 264-amino-acid chain; its full sequence is uncharacterized protein (264 aa).

Residues 1–20 (MENIEKKCQPETINEDNNDE) are disordered.

It belongs to the mimivirus R73/L269/L862 family.

This is an uncharacterized protein from Acanthamoeba polyphaga mimivirus (APMV).